The chain runs to 882 residues: Lon protease homolog, mitochondrial (882 aa).

Residues 1 to 34 (MIHVLKSRSTLLTASSIVRTSVGSSSRYSQTRTY) constitute a mitochondrion transit peptide. One can recognise a Lon N-terminal domain in the interval 68–281 (TLGLPLVSRP…KALVLLNRER (214 aa)). ATP is bound at residue 435-442 (GPPGTGKT). The Lon proteolytic domain occupies 687-878 (PLPHGIVMGL…DKVYEVAFSS (192 aa)). Catalysis depends on residues serine 784 and lysine 827.

This sequence belongs to the peptidase S16 family. As to quaternary structure, homohexamer or homoheptamer. Organized in a ring with a central cavity.

It is found in the mitochondrion matrix. It carries out the reaction Hydrolysis of proteins in presence of ATP.. In terms of biological role, ATP-dependent serine protease that mediates the selective degradation of misfolded, unassembled or oxidatively damaged polypeptides as well as certain short-lived regulatory proteins in the mitochondrial matrix. May also have a chaperone function in the assembly of inner membrane protein complexes. Participates in the regulation of mitochondrial gene expression and in the maintenance of the integrity of the mitochondrial genome. Binds to mitochondrial DNA in a site-specific manner. The chain is Lon protease homolog, mitochondrial from Phaeodactylum tricornutum (strain CCAP 1055/1).